The sequence spans 371 residues: Queuine tRNA-ribosyltransferase (371 aa).

D92 acts as the Proton acceptor in catalysis. Substrate is bound by residues 92 to 96, D147, Q190, and G217; that span reads DSGGF. Residues 248–254 are RNA binding; that stretch reads GVGKPID. Residue D267 is the Nucleophile of the active site. The segment at 272–276 is RNA binding; important for wobble base 34 recognition; that stretch reads TRSGR.

This sequence belongs to the queuine tRNA-ribosyltransferase family. Homodimer. Within each dimer, one monomer is responsible for RNA recognition and catalysis, while the other monomer binds to the replacement base PreQ1.

The enzyme catalyses 7-aminomethyl-7-carbaguanine + guanosine(34) in tRNA = 7-aminomethyl-7-carbaguanosine(34) in tRNA + guanine. It functions in the pathway tRNA modification; tRNA-queuosine biosynthesis. Functionally, catalyzes the base-exchange of a guanine (G) residue with the queuine precursor 7-aminomethyl-7-deazaguanine (PreQ1) at position 34 (anticodon wobble position) in tRNAs with GU(N) anticodons (tRNA-Asp, -Asn, -His and -Tyr). Catalysis occurs through a double-displacement mechanism. The nucleophile active site attacks the C1' of nucleotide 34 to detach the guanine base from the RNA, forming a covalent enzyme-RNA intermediate. The proton acceptor active site deprotonates the incoming PreQ1, allowing a nucleophilic attack on the C1' of the ribose to form the product. After dissociation, two additional enzymatic reactions on the tRNA convert PreQ1 to queuine (Q), resulting in the hypermodified nucleoside queuosine (7-(((4,5-cis-dihydroxy-2-cyclopenten-1-yl)amino)methyl)-7-deazaguanosine). The protein is Queuine tRNA-ribosyltransferase of Caulobacter vibrioides (strain ATCC 19089 / CIP 103742 / CB 15) (Caulobacter crescentus).